The primary structure comprises 465 residues: tRNA modification GTPase MnmE (465 aa).

R30, E92, and R132 together coordinate (6S)-5-formyl-5,6,7,8-tetrahydrofolate. The TrmE-type G domain maps to 227–388 (GLQVALVGRP…LIEAVLKTCG (162 aa)). Residue N237 participates in K(+) binding. Residues 237-242 (NVGKSS), 256-262 (TDLPGTT), 281-284 (DTAG), and 342-345 (NKAD) contribute to the GTP site. S241 serves as a coordination point for Mg(2+). K(+) contacts are provided by T256, L258, and T261. Mg(2+) is bound at residue T262. K465 is a (6S)-5-formyl-5,6,7,8-tetrahydrofolate binding site.

This sequence belongs to the TRAFAC class TrmE-Era-EngA-EngB-Septin-like GTPase superfamily. TrmE GTPase family. In terms of assembly, homodimer. Heterotetramer of two MnmE and two MnmG subunits. K(+) is required as a cofactor.

The protein localises to the cytoplasm. In terms of biological role, exhibits a very high intrinsic GTPase hydrolysis rate. Involved in the addition of a carboxymethylaminomethyl (cmnm) group at the wobble position (U34) of certain tRNAs, forming tRNA-cmnm(5)s(2)U34. The sequence is that of tRNA modification GTPase MnmE from Prochlorococcus marinus (strain MIT 9303).